Here is a 137-residue protein sequence, read N- to C-terminus: uncharacterized protein (137 aa).

A helical membrane pass occupies residues 20–42; it reads TVLAFKGEGALALAGLLVMAAVA.

The protein localises to the host membrane. This is an uncharacterized protein from Dryophytes versicolor (chameleon treefrog).